We begin with the raw amino-acid sequence, 217 residues long: MQRFTDFYAAMHGGSSVTPTGLGYIPMVIEQSGRGERAYDIYSRLLRERLIFLVGPVNDNTANLVVAQLLFLESENPDKDISFYINSPGGSVYAGMAIYDTMQFIKPDVSTLCTGLAASMGAFLLAAGKKGKRFTLPNSRIMIHQPSGGAQGQASDIQIQAREILDLRERLNRILAENTGQPVERIAVDTERDNFMSAEDAVSYGLVDKVLTSRAQT.

The Nucleophile role is filled by Ser119. The active site involves His144.

It belongs to the peptidase S14 family. In terms of assembly, fourteen ClpP subunits assemble into 2 heptameric rings which stack back to back to give a disk-like structure with a central cavity, resembling the structure of eukaryotic proteasomes.

Its subcellular location is the cytoplasm. It carries out the reaction Hydrolysis of proteins to small peptides in the presence of ATP and magnesium. alpha-casein is the usual test substrate. In the absence of ATP, only oligopeptides shorter than five residues are hydrolyzed (such as succinyl-Leu-Tyr-|-NHMec, and Leu-Tyr-Leu-|-Tyr-Trp, in which cleavage of the -Tyr-|-Leu- and -Tyr-|-Trp bonds also occurs).. Cleaves peptides in various proteins in a process that requires ATP hydrolysis. Has a chymotrypsin-like activity. Plays a major role in the degradation of misfolded proteins. The protein is ATP-dependent Clp protease proteolytic subunit of Bordetella bronchiseptica (strain ATCC BAA-588 / NCTC 13252 / RB50) (Alcaligenes bronchisepticus).